The following is a 200-amino-acid chain: Mediator of RNA polymerase II transcription subunit 29 (200 aa).

Composition is skewed to low complexity over residues 1-20 (MAASQQQASATTSTASVSGP) and 36-48 (AQLVGPAQSGLLQ). The disordered stretch occupies residues 1 to 48 (MAASQQQASATTSTASVSGPGSAGGSGPQQQPQPPAQLVGPAQSGLLQ). Ala-2 is subject to N-acetylalanine.

The protein belongs to the Mediator complex subunit 29 family. As to quaternary structure, component of the TRAP/SMCC mediator complex. Interacts with MED20/TRFP. Associates with the MED18-MED20 heteromer.

It localises to the nucleus. Its function is as follows. Component of the mediator complex, a complex that can either repress or activate transcription. Mediator complexes are essential for basal and regulated expression of nearly all RNA polymerase II-dependent genes. They may act as a bridge, conveying regulatory information from enhancers and other control elements to the promoter. This chain is Mediator of RNA polymerase II transcription subunit 29 (MED29), found in Bos taurus (Bovine).